Here is a 741-residue protein sequence, read N- to C-terminus: Endoplasmic reticulum membrane sensor NFE2L1 (741 aa).

Residues 7-24 (YLTEGLLQFTILLSLIGV) form a helical; Signal-anchor for type II membrane protein membrane-spanning segment. Disordered stretches follow at residues 108-148 (DPEG…TEQG) and 198-220 (QKEQ…WSGE). The span at 113 to 131 (VSGSQPNSGLALESSSGLQ) shows a compositional bias: polar residues. Residues 191–199 (VFDYSHRQK) form a cholesterol recognition/amino acid consensus (CRAC) region region. Residues 198–216 (QKEQDVDKELQDGREREDT) are compositionally biased toward basic and acidic residues. N-linked (GlcNAc...) asparagine glycans are attached at residues Asn319 and Asn331. Residues 350-354 (SPEVE) form a CPD region. N-linked (GlcNAc...) asparagine glycosylation is present at Asn394. Disordered regions lie at residues 441 to 501 (EEEF…DSET) and 551 to 582 (SALD…QMSR). The Destruction motif motif lies at 447–451 (DSGLS). The segment covering 447-492 (DSGLSLDSSHSPSSLSSSEGSSSSSSSSSSSSASSSASSSFSEEGA) has biased composition (low complexity). Position 497 is a phosphoserine; by CK2 (Ser497). Basic and acidic residues predominate over residues 567-582 (GSKEKQADFLDKQMSR). Ser568 carries the post-translational modification Phosphoserine. The bZIP domain maps to 623–686 (LIRDIRRRGK…RQMKQKVQSL (64 aa)). The tract at residues 625–644 (RDIRRRGKNKMAAQNCRKRK) is basic motif. The leucine-zipper stretch occupies residues 651–665 (LERDVEDLQRDKARL). Positions 722–741 (RTMADQQARRQERKPKDRRK) are disordered. A Nuclear localization signal motif is present at residues 730 to 737 (RRQERKPK). Positions 732 to 741 (QERKPKDRRK) are enriched in basic residues.

This sequence belongs to the bZIP family. CNC subfamily. As to quaternary structure, interacts with KEAP1. In terms of assembly, interacts (via CPD region) with FBXW7; leading to its ubiquitination and degradation. Interacts with SYVN1/HRD1; leading to its ubiquitination and degradation. Interacts (when ubiquitinated) with DDI2; leading to its cleavage. Interacts (via the bZIP domain) with small MAF protein (MAFF, MAFG or MAFK); required for binding to antioxidant response elements (AREs) on DNA. Interacts (via Destruction motif) with BTRC; leading to its ubiquitination and degradation. Interacts with CEBPB; the heterodimer represses expression of DSPP during odontoblast differentiation. Interacts with MOTS-c, a peptide produced by the mitochondrially encoded 12S rRNA MT-RNR1. Cleaved at Leu-104 by the aspartyl protease DDI2 following retrotranslocation, releasing the protein from the endoplasmic reticulum membrane and forming the transcription factor NRF1 that translocates into the nucleus. Ubiquitination is prerequisite for cleavage by aspartyl protease DDI2. In terms of processing, N-glycosylated in normal conditions, when it has a single-pass type II membrane protein topology, with the DNA-binding domain facing the endoplasmic reticulum lumen. Deglycosylated during retrotranslocation to the cytosolic side of the membrane, to have a single-pass type III membrane protein topology with the major part of the protein facing the cytosol. Post-translationally, ubiquitinated by the SCF(FBXW7) complex and SYVN1/HRD1, leading to its degradation by the proteasome. Ubiquitinated during retrotranslocation to the cytosolic side of the membrane: ubiquitination does not lead to degradation and is required for processing by the aspartyl protease DDI2 and subsequent release from the endoplasmic reticulum membrane. Phosphorylation by CK2 at Ser-497 inhibits transcription factor activity, possibly by affecting DNA-binding activity. Phosphorylation at Ser-568 is required for interaction with CEBPB. In terms of processing, ubiquitinated by the SCF(BTRC) complex in the nucleus, leading to its degradation by the proteasome. As to expression, isoform 1: Widely expressed including kidney, brown fat, white fat, large intestine, small intestine, stomach, lung, brain and liver. Isoform 1: Expressed in mouse embryonic fibroblasts (MEF). Isoform 2: Widely expressed including kidney, brown fat, white fat, large intestine, small intestine, stomach, lung, brain and liver. Isoform 2: levels in white fat, lung and liver are increased compared to isoform 1 (at protein level). Isoform 2: levels are elevated in brown fat and brain, but are reduced in liver compared to isoform 1 levels. Isoform 2: Expressed in mouse embryonic fibroblasts (MEF).

The protein resides in the endoplasmic reticulum membrane. It is found in the nucleus. It localises to the cytoplasm. Functionally, endoplasmic reticulum membrane sensor that translocates into the nucleus in response to various stresses to act as a transcription factor. Constitutes a precursor of the transcription factor NRF1. Able to detect various cellular stresses, such as cholesterol excess, oxidative stress or proteasome inhibition. In response to stress, it is released from the endoplasmic reticulum membrane following cleavage by the protease DDI2 and translocates into the nucleus to form the transcription factor NRF1. Acts as a key sensor of cholesterol excess: in excess cholesterol conditions, the endoplasmic reticulum membrane form of the protein directly binds cholesterol via its CRAC motif, preventing cleavage and release of the transcription factor NRF1, thereby allowing expression of genes promoting cholesterol removal, such as CD36. Involved in proteasome homeostasis: in response to proteasome inhibition, it is released from the endoplasmic reticulum membrane, translocates to the nucleus and activates expression of genes encoding proteasome subunits. CNC-type bZIP family transcription factor that translocates to the nucleus and regulates expression of target genes in response to various stresses. Heterodimerizes with small-Maf proteins (MAFF, MAFG or MAFK) and binds DNA motifs including the antioxidant response elements (AREs), which regulate expression of genes involved in oxidative stress response. Activates or represses expression of target genes, depending on the context. Plays a key role in cholesterol homeostasis by acting as a sensor of cholesterol excess: in low cholesterol conditions, translocates into the nucleus and represses expression of genes involved in defense against cholesterol excess, such as CD36. In excess cholesterol conditions, the endoplasmic reticulum membrane form of the protein directly binds cholesterol via its CRAC motif, preventing cleavage and release of the transcription factor NRF1, thereby allowing expression of genes promoting cholesterol removal. Critical for redox balance in response to oxidative stress: acts by binding the AREs motifs on promoters and mediating activation of oxidative stress response genes, such as GCLC, GCLM, GSS, MT1 and MT2. Plays an essential role during fetal liver hematopoiesis: probably has a protective function against oxidative stress and is involved in lipid homeostasis in the liver. Involved in proteasome homeostasis: in response to proteasome inhibition, mediates the 'bounce-back' of proteasome subunits by translocating into the nucleus and activating expression of genes encoding proteasome subunits. Also involved in regulating glucose flux. Together with CEBPB; represses expression of DSPP during odontoblast differentiation. In response to ascorbic acid induction, activates expression of SP7/Osterix in osteoblasts. In terms of biological role, transcription factor that binds the antioxidant response elements (ARE) consensus sequence on promoters and activates their expression. Its function is as follows. Transcription factor that binds the extended kappa 3 site of the TNF-alpha promoter after Fc gamma RIII stimulation and participates in the induction of this cytokine. This is Endoplasmic reticulum membrane sensor NFE2L1 from Mus musculus (Mouse).